A 187-amino-acid polypeptide reads, in one-letter code: Adenylate kinase (187 aa).

Residue 12–17 participates in ATP binding; the sequence is GAGKGT. The segment at 32–61 is NMP; it reads STGDIFRANLAENTELGQKARQFMDAGDLV. AMP is bound by residues threonine 33, arginine 38, 59–61, 87–90, and glutamine 94; these read DLV and GYPR. Residues 128–134 form an LID region; it reads GRGRADD. Position 129 (arginine 129) interacts with ATP. Residues arginine 131 and arginine 142 each contribute to the AMP site. Arginine 170 serves as a coordination point for ATP.

The protein belongs to the adenylate kinase family. In terms of assembly, monomer.

It is found in the cytoplasm. It carries out the reaction AMP + ATP = 2 ADP. The protein operates within purine metabolism; AMP biosynthesis via salvage pathway; AMP from ADP: step 1/1. Its function is as follows. Catalyzes the reversible transfer of the terminal phosphate group between ATP and AMP. Plays an important role in cellular energy homeostasis and in adenine nucleotide metabolism. This is Adenylate kinase from Leuconostoc mesenteroides subsp. mesenteroides (strain ATCC 8293 / DSM 20343 / BCRC 11652 / CCM 1803 / JCM 6124 / NCDO 523 / NBRC 100496 / NCIMB 8023 / NCTC 12954 / NRRL B-1118 / 37Y).